A 144-amino-acid chain; its full sequence is Signal recognition particle 19 kDa protein (144 aa).

Positions 117–144 (TRTQKTGGGDQSLQQGEGSKKGKGKKKK) are disordered.

The protein belongs to the SRP19 family. In terms of assembly, component of a signal recognition particle complex that consists of a 7SL RNA molecule of 300 nucleotides and six protein subunits: SRP72, SRP68, SRP54, SRP19, SRP14 and SRP9. Interacts with IPO5, IPO7, IPO8, KPNB1 and TNPO1. Interactions with IPO8 and TNPO1 may be involved in SRP19 import into the nucleus.

It is found in the cytoplasm. It localises to the nucleus. Its subcellular location is the nucleolus. The protein localises to the nucleoplasm. Functionally, component of the signal recognition particle (SRP) complex, a ribonucleoprotein complex that mediates the cotranslational targeting of secretory and membrane proteins to the endoplasmic reticulum (ER). Binds directly to 7SL RNA. Mediates binding of SRP54 to the SRP complex. The protein is Signal recognition particle 19 kDa protein of Canis lupus familiaris (Dog).